A 317-amino-acid polypeptide reads, in one-letter code: Protein KlaC (317 aa).

Belongs to the kla operon, which is associated with cryptic tellurite resistance, and IncW plasmid fertility inhibition. The chain is Protein KlaC (klaC) from Escherichia coli.